The following is a 166-amino-acid chain: MVVAVYPGTFDPLTRGHEDLVRRASSIFDTLVVGVADSRAKKPFFSLEERLKIANEVLGHYPNVKVMGFTGLLKDFVRANDARVIVRGLRAVSDFEYEFQMAGMNRYLLPDVETMFMTPSDQYQFISGTIVREIAQLGGDVSKFVFPSVEKWLTEKVAAMAQGPSA.

Residue T9 participates in substrate binding. ATP is bound by residues 9–10 and H17; that span reads TF. 3 residues coordinate substrate: K41, L73, and R87. ATP-binding positions include 88 to 90, E98, and 123 to 129; these read GLR and YQFISGT.

The protein belongs to the bacterial CoaD family. As to quaternary structure, homohexamer. The cofactor is Mg(2+).

The protein localises to the cytoplasm. The catalysed reaction is (R)-4'-phosphopantetheine + ATP + H(+) = 3'-dephospho-CoA + diphosphate. It participates in cofactor biosynthesis; coenzyme A biosynthesis; CoA from (R)-pantothenate: step 4/5. In terms of biological role, reversibly transfers an adenylyl group from ATP to 4'-phosphopantetheine, yielding dephospho-CoA (dPCoA) and pyrophosphate. This is Phosphopantetheine adenylyltransferase from Burkholderia mallei (strain NCTC 10229).